We begin with the raw amino-acid sequence, 228 residues long: tRNA (guanine-N(1)-)-methyltransferase (228 aa).

S-adenosyl-L-methionine-binding positions include Gly-108 and 127–132 (VGDFIL).

It belongs to the RNA methyltransferase TrmD family. As to quaternary structure, homodimer.

The protein localises to the cytoplasm. The enzyme catalyses guanosine(37) in tRNA + S-adenosyl-L-methionine = N(1)-methylguanosine(37) in tRNA + S-adenosyl-L-homocysteine + H(+). Specifically methylates guanosine-37 in various tRNAs. This Metamycoplasma arthritidis (strain 158L3-1) (Mycoplasma arthritidis) protein is tRNA (guanine-N(1)-)-methyltransferase.